The following is a 555-amino-acid chain: Membrane protein insertase YidC (555 aa).

The next 5 helical transmembrane spans lie at 7–24 (VLWV…DNWQ), 367–387 (WGWS…PLSA), 437–457 (LPVV…LASV), 476–496 (PFFI…SLNP), and 511–531 (PIAF…YYVV).

This sequence belongs to the OXA1/ALB3/YidC family. Type 1 subfamily. As to quaternary structure, interacts with the Sec translocase complex via SecD. Specifically interacts with transmembrane segments of nascent integral membrane proteins during membrane integration.

The protein resides in the cell inner membrane. Functionally, required for the insertion and/or proper folding and/or complex formation of integral membrane proteins into the membrane. Involved in integration of membrane proteins that insert both dependently and independently of the Sec translocase complex, as well as at least some lipoproteins. Aids folding of multispanning membrane proteins. The chain is Membrane protein insertase YidC from Burkholderia lata (strain ATCC 17760 / DSM 23089 / LMG 22485 / NCIMB 9086 / R18194 / 383).